Here is a 329-residue protein sequence, read N- to C-terminus: Malate dehydrogenase (329 aa).

12–18 serves as a coordination point for NAD(+); that stretch reads GAAGQIG. Positions 93 and 99 each coordinate substrate. Residues Asn106, Gln113, and 130-132 contribute to the NAD(+) site; that span reads VGN. Residues Asn132 and Arg163 each contribute to the substrate site. The active-site Proton acceptor is the His188.

The protein belongs to the LDH/MDH superfamily. MDH type 2 family.

It carries out the reaction (S)-malate + NAD(+) = oxaloacetate + NADH + H(+). Functionally, catalyzes the reversible oxidation of malate to oxaloacetate. The chain is Malate dehydrogenase from Frankia alni (strain DSM 45986 / CECT 9034 / ACN14a).